Here is a 588-residue protein sequence, read N- to C-terminus: Myc box-dependent-interacting protein 1 (588 aa).

Position 2 is an N-acetylalanine (alanine 2). Residues 2–122 form an interaction with BIN2 region; the sequence is AEMGSKGVTA…DYHQKLVDQA (121 aa). Coiled coils occupy residues 15-42 and 193-274; these read ASNV…TKDE and HLVA…EKQH. Positions 29–276 constitute a BAR domain; that stretch reads VLQKLGKADE…LVSLEKQHGS (248 aa). The segment at 279-355 is disordered; it reads FTVKAQPSDS…PKHTPSKEMK (77 aa). Serine 296, serine 298, and serine 304 each carry phosphoserine. Phosphothreonine is present on threonine 308. Residues serine 324 and serine 332 each carry the phosphoserine modification. The tract at residues 379-422 is clathrin-binding; it reads FEAPGPFSEQASLLDLDFEPLPPVASPVKAPTPSGQSIPWDLWE. The disordered stretch occupies residues 448 to 483; it reads PSQTAEPGPAQPAEASEVVGGTQEPGETAASEATSS. A compositionally biased stretch (low complexity) spans 474 to 483; it reads ETAASEATSS. The region spanning 515-588 is the SH3 domain; that stretch reads GFMFKVQAQH…FPENFTERVQ (74 aa).

As to quaternary structure, heterodimer with AMPH. Binds SH3GLB1. Interacts (via SH3 domain) with DNM1. Interacts with SYNJ1. Interacts (via SH3 domain) with DNM2. Interacts with CLTC. Interacts with AP2A2. Interacts with AP2B1. Interacts with MYC (via N-terminal transactivation domain); the interaction requires the integrity of the conserved MYC box regions 1 and 2. Interacts with BIN2. Interacts with SNX4. Interacts (via BAR domain) with BACE1. Binds (via BAR domain) F-actin. Phosphorylated by protein kinase C. In terms of tissue distribution, highly expressed in the brain and muscle. Isoform AMPH2-1 is expressed only in the brain where it is concentrated in axon initial segments and nodes of Ranvier. Isoform AMPH2-2 is widely expressed.

It localises to the nucleus. The protein localises to the cytoplasm. It is found in the endosome. Its subcellular location is the cell membrane. The protein resides in the sarcolemma. It localises to the T-tubule. In terms of biological role, is a key player in the control of plasma membrane curvature, and membrane shaping and remodeling. Required in muscle cells for the formation of T-tubules, tubular invaginations of the plasma membrane that function in depolarization-contraction coupling. Required in muscle cells for the formation of T-tubules, tubular invaginations of the plasma membrane that function in depolarization-contraction coupling. Is a negative regulator of endocytosis. Is also involved in the regulation of intracellular vesicles sorting, modulation of BACE1 trafficking and the control of amyloid-beta production. In neuronal circuits, endocytosis regulation may influence the internalization of PHF-tau aggregates. May be involved in the regulation of MYC activity and the control cell proliferation. This chain is Myc box-dependent-interacting protein 1 (Bin1), found in Rattus norvegicus (Rat).